The chain runs to 71 residues: Large ribosomal subunit protein uL29 (71 aa).

The protein belongs to the universal ribosomal protein uL29 family. Part of the 50S ribosomal subunit. Interacts with protein L23.

Functionally, stabilizes the tertiary rRNA structure within the 23S rRNA domain (domain I) to which it binds. Located at the polypeptide exit tunnel on the outside of the subunit. The polypeptide is Large ribosomal subunit protein uL29 (rpl29) (Haloarcula marismortui (strain ATCC 43049 / DSM 3752 / JCM 8966 / VKM B-1809) (Halobacterium marismortui)).